Consider the following 104-residue polypeptide: Met repressor (104 aa).

Belongs to the MetJ family. As to quaternary structure, homodimer.

The protein resides in the cytoplasm. Functionally, this regulatory protein, when combined with SAM (S-adenosylmethionine) represses the expression of the methionine regulon and of enzymes involved in SAM synthesis. The chain is Met repressor from Shewanella oneidensis (strain ATCC 700550 / JCM 31522 / CIP 106686 / LMG 19005 / NCIMB 14063 / MR-1).